A 304-amino-acid chain; its full sequence is Homoserine kinase (304 aa).

Residue 90–100 participates in ATP binding; that stretch reads PLARGLGSSAS.

It belongs to the GHMP kinase family. Homoserine kinase subfamily.

It is found in the cytoplasm. It catalyses the reaction L-homoserine + ATP = O-phospho-L-homoserine + ADP + H(+). Its pathway is amino-acid biosynthesis; L-threonine biosynthesis; L-threonine from L-aspartate: step 4/5. In terms of biological role, catalyzes the ATP-dependent phosphorylation of L-homoserine to L-homoserine phosphate. The chain is Homoserine kinase from Staphylococcus aureus (strain MSSA476).